The chain runs to 64 residues: Large ribosomal subunit protein bL28C (64 aa).

It belongs to the bacterial ribosomal protein bL28 family.

The chain is Large ribosomal subunit protein bL28C from Mycobacterium tuberculosis (strain ATCC 25618 / H37Rv).